The primary structure comprises 121 residues: MKLIFTEYSAILIFFAISSLLSSVIFLLSYFLIPQKPDQEKVSAYECGFNPFDDARATFDIRFYLVAILFLIFDLEISFLFPWSLVLGEISIIGFWSMIVFLVILTIGFIYEWYKGALEWE.

A run of 3 helical transmembrane segments spans residues 11-31 (ILIFFAISSLLSSVIFLLSYF), 63-83 (FYLVAILFLIFDLEISFLFPW), and 90-110 (ISIIGFWSMIVFLVILTIGFI).

Belongs to the complex I subunit 3 family.

The protein localises to the mitochondrion membrane. It catalyses the reaction a ubiquinone + NADH + 5 H(+)(in) = a ubiquinol + NAD(+) + 4 H(+)(out). In terms of biological role, core subunit of the mitochondrial membrane respiratory chain NADH dehydrogenase (Complex I) that is believed to belong to the minimal assembly required for catalysis. Complex I functions in the transfer of electrons from NADH to the respiratory chain. The immediate electron acceptor for the enzyme is believed to be ubiquinone. The chain is NADH-ubiquinone oxidoreductase chain 3 (ND3) from Chondrus crispus (Carrageen Irish moss).